The chain runs to 75 residues: Protein Tlp homolog (75 aa).

A disordered region spans residues 52-75 (RREALDGMREEIKDEARDKKNGYM).

This sequence belongs to the Tlp family.

This chain is Protein Tlp homolog, found in Clostridium botulinum (strain Okra / Type B1).